The primary structure comprises 990 residues: MKENNLNRVIGWSGLLLTSLLSTSALADNIGTSAEELGLSDYRHFVIYPRLDKALKAQKNNDEATAIREFEYIHQQVPDNIPLTLYLAEAYRHFGHDDRARLLLEDQLKRHPGDARLERSLAAIPVEVKSVTTVEELLAQQKACDAAPTLRCRSEVGQNALRLAQLPVARAQLNDATFAASPEGKTLRTDLLQRAIYLKQWSQADTLYNEARQQNTLSAAERRQWFDVLLAGQLDDRILALQSQGIFTDPQSYITYATALAYRGEKARLQHYLIENKPLFTTDAQEKSWLYLLSKYSANPVQALANYTVQFADNRQYVVGATLPVLLKEGQYDAAQKLLATLPANEMLEERYAVSVATRNKAEALRLARLLYQQEPANLTRLDQLTWQLMQNEQSREAADLLLQRYPFQGDARVSQTLMARLASLLESHPYLATPAKVAILSKPLPLAEQRQWQSQLPGIADNCPAIVRLLGDMSPSYDAAAWNRLAKCYRDTLPGVALYAWLQAEQRQPSAWQHRAVAYQAYQVEDYATALAAWQKISLHDMSNEDLLAAANTAQAAGNGAARDRWLQQAEKRGLGSNALYWWLHAQRYIPGQPELALNDLTRSINIAPSANAYVARATIYRQRHNVPAAVSDLRAALELEPNNSNTQAALGYALWDSGDIAQSREMLEPAHKGLPDDPALIRQLAYVNQRLDDMPATQHYARLVIDDIDNQALITPLTPEQNQQRFNFRRLHEEVGRRWTFSFDSSIGLRSGAMSTANNNVGGAAPGKSYRSYGQLEAEYRIGRNMLLEGDLLSVYSRVFADTGENGVMMPVKNPMSGTGLRWKPLRDQIFFIAVEQQLPLNGQNGASDTMLRASASFFNGGKYSDEWHPNGSGWFAQNLYLDAAQYIRQDIQAWTADYRVSWHQKVANGQTIEPYAHVQDNGYRDKGTQGAQLGGVGVRWNIWTGETHYDAWPHKVSLGVEYQHTFKAINQRNGERNNAFLTIGVHW.

A signal peptide spans 1–27; it reads MKENNLNRVIGWSGLLLTSLLSTSALA. 3 TPR repeats span residues 81 to 114, 612 to 645, and 646 to 679; these read IPLT…HPGD, ANAY…EPNN, and SNTQ…LPDD.

(Microbial infection) Interacts with N4 phage non-contractile sheath protein; this interaction is essential for viral adsorption to the host.

Its subcellular location is the cell outer membrane. In terms of biological role, (Microbial infection) Allows N4 phage attachment by binding to the viral non-contractile sheath protein. This is Bacteriophage adsorption protein A (nfrA) from Escherichia coli (strain K12).